The sequence spans 68 residues: Small integral membrane protein 45 (68 aa).

Residues 7–27 (WFVPVYLVISVLILVGFGACI) traverse the membrane as a helical segment.

As to expression, highly expressed in brain.

Its subcellular location is the nucleus. The protein resides in the cytoplasm. It localises to the membrane. Its function is as follows. Plays a role in the regulation of neuron maturation. In Homo sapiens (Human), this protein is Small integral membrane protein 45.